The chain runs to 317 residues: Methionyl-tRNA formyltransferase (317 aa).

112–115 serves as a coordination point for (6S)-5,6,7,8-tetrahydrofolate; it reads SLLP.

It belongs to the Fmt family.

It catalyses the reaction L-methionyl-tRNA(fMet) + (6R)-10-formyltetrahydrofolate = N-formyl-L-methionyl-tRNA(fMet) + (6S)-5,6,7,8-tetrahydrofolate + H(+). Its function is as follows. Attaches a formyl group to the free amino group of methionyl-tRNA(fMet). The formyl group appears to play a dual role in the initiator identity of N-formylmethionyl-tRNA by promoting its recognition by IF2 and preventing the misappropriation of this tRNA by the elongation apparatus. The sequence is that of Methionyl-tRNA formyltransferase from Mycobacterium avium (strain 104).